Here is a 203-residue protein sequence, read N- to C-terminus: Dephospho-CoA kinase (203 aa).

Residues 3-201 (SVGLTGGIGS…QRYLGYAAAA (199 aa)) enclose the DPCK domain. 11 to 16 (GSGKTT) is an ATP binding site.

It belongs to the CoaE family.

It is found in the cytoplasm. It carries out the reaction 3'-dephospho-CoA + ATP = ADP + CoA + H(+). It functions in the pathway cofactor biosynthesis; coenzyme A biosynthesis; CoA from (R)-pantothenate: step 5/5. In terms of biological role, catalyzes the phosphorylation of the 3'-hydroxyl group of dephosphocoenzyme A to form coenzyme A. This chain is Dephospho-CoA kinase, found in Burkholderia thailandensis (strain ATCC 700388 / DSM 13276 / CCUG 48851 / CIP 106301 / E264).